The sequence spans 237 residues: 4'-phosphopantetheinyl transferase gsp (237 aa).

Asp106, Glu108, and Glu150 together coordinate Mg(2+).

Belongs to the P-Pant transferase superfamily. Gsp/Sfp/HetI/AcpT family. Requires Mg(2+) as cofactor.

It catalyses the reaction apo-[peptidyl-carrier protein] + CoA = holo-[peptidyl-carrier protein] + adenosine 3',5'-bisphosphate + H(+). In terms of biological role, activates the five peptidyl carrier protein (PCP) domains of gramicidin synthase GrsAB, by transferring the 4'-phosphopantetheinyl moiety of coenzyme A (CoA) to a serine residue. Required for gramicidin S production. The protein is 4'-phosphopantetheinyl transferase gsp (gsp) of Aneurinibacillus migulanus (Bacillus migulanus).